The following is a 282-amino-acid chain: Bifunctional protein FolD (282 aa).

Position 163–165 (163–165) interacts with NADP(+); that stretch reads GRS.

This sequence belongs to the tetrahydrofolate dehydrogenase/cyclohydrolase family. Homodimer.

The catalysed reaction is (6R)-5,10-methylene-5,6,7,8-tetrahydrofolate + NADP(+) = (6R)-5,10-methenyltetrahydrofolate + NADPH. It carries out the reaction (6R)-5,10-methenyltetrahydrofolate + H2O = (6R)-10-formyltetrahydrofolate + H(+). It participates in one-carbon metabolism; tetrahydrofolate interconversion. Catalyzes the oxidation of 5,10-methylenetetrahydrofolate to 5,10-methenyltetrahydrofolate and then the hydrolysis of 5,10-methenyltetrahydrofolate to 10-formyltetrahydrofolate. This chain is Bifunctional protein FolD, found in Leuconostoc citreum (strain KM20).